A 607-amino-acid polypeptide reads, in one-letter code: MRVLYIHAERFSWESREPALDIRDEPGSGAAANALVVFVSVERGDSSDEEFLRRVARDVVETAEKVKATAVVIYPYAHLSNDLARPYVAKEVVNKLYEVVKSEFKGEVYKAPFGYYKAFEVKCLGHPLAELSRSFKPEEARVAKAVEERRDVYLVLTPDGREHDPAAYSPADPDLKALIDKEVFKRELGGGEPRYLDYLRKFGFEWEPMSDVGHMRYGPEATVMMELVEDYAYQVAKSLGIPVFKIRGTNMFKLSEKAIETHARLFGERLYIVESDTDLILRYAACFQQFAMAKDWVISYRNLPFGMLEIADSYRHEQPGETVVLFRLRRFYMPDLHIFTKDLAEAVEVSYKVHEAIFREIGKLGRTYVSLYNVTEEFYKSHRDYLVELARREGKPILVRILPTQKYYWVLNVEYHIVDELGRPREIATFQIDVGNAQRFGIKYVDENNQVKYPVIIHTAIIGSVERYLYAVFDTIAKAEREGKTPRLPTWLAPVQVRIIPVARDNLKFAMEVADKLEEAGIRVDVDDRDETLSKRIRDAETSWVPYVCVVGSKEEETGTLSVRIRGEGQAKMTAEELIKRVREETRGYPTRPLYLPRLLSQRPTRG.

Positions 1 to 143 are editing domain; it reads MRVLYIHAER…SFKPEEARVA (143 aa). Catalytic regions lie at residues 193-489 and 194-489; these read PRYL…PRLP and RYLD…PRLP. Positions 286, 337, and 458 each coordinate Zn(2+).

The protein belongs to the class-II aminoacyl-tRNA synthetase family. As to quaternary structure, homodimer. Requires Zn(2+) as cofactor.

Its subcellular location is the cytoplasm. It carries out the reaction tRNA(Thr) + L-threonine + ATP = L-threonyl-tRNA(Thr) + AMP + diphosphate + H(+). Its function is as follows. Catalyzes the attachment of threonine to tRNA(Thr) in a two-step reaction: L-threonine is first activated by ATP to form Thr-AMP and then transferred to the acceptor end of tRNA(Thr). Also edits incorrectly charged L-seryl-tRNA(Thr). The polypeptide is Threonine--tRNA ligase (Pyrobaculum calidifontis (strain DSM 21063 / JCM 11548 / VA1)).